The chain runs to 155 residues: Pathogenesis-related protein STH-2 (155 aa).

The protein belongs to the BetVI family.

This chain is Pathogenesis-related protein STH-2 (STH-2), found in Solanum tuberosum (Potato).